Consider the following 21-residue polypeptide: Agglutinin beta-1 chain (21 aa).

The segment covering 1–10 (NGPNGKSQSI) has biased composition (polar residues). The disordered stretch occupies residues 1 to 21 (NGPNGKSQSIIVGPWGDRVTN).

It belongs to the jacalin lectin family. Formed of four alpha chains and four beta chains.

In terms of biological role, D-galactose-specific lectin, binds the T-antigen structure Gal-beta1,3-GalNAc. This is Agglutinin beta-1 chain from Maclura pomifera (Osage orange).